Here is a 143-residue protein sequence, read N- to C-terminus: UPF0179 protein PTO0851 (143 aa).

The protein belongs to the UPF0179 family.

This chain is UPF0179 protein PTO0851, found in Picrophilus torridus (strain ATCC 700027 / DSM 9790 / JCM 10055 / NBRC 100828 / KAW 2/3).